The primary structure comprises 955 residues: 2-oxoglutarate dehydrogenase E1 component (955 aa).

It belongs to the alpha-ketoglutarate dehydrogenase family. In terms of assembly, homodimer. Part of the 2-oxoglutarate dehydrogenase (OGDH) complex composed of E1 (2-oxoglutarate dehydrogenase), E2 (dihydrolipoamide succinyltransferase) and E3 (dihydrolipoamide dehydrogenase); the complex contains multiple copies of the three enzymatic components (E1, E2 and E3). Thiamine diphosphate is required as a cofactor.

It catalyses the reaction N(6)-[(R)-lipoyl]-L-lysyl-[protein] + 2-oxoglutarate + H(+) = N(6)-[(R)-S(8)-succinyldihydrolipoyl]-L-lysyl-[protein] + CO2. Its function is as follows. E1 component of the 2-oxoglutarate dehydrogenase (OGDH) complex which catalyzes the decarboxylation of 2-oxoglutarate, the first step in the conversion of 2-oxoglutarate to succinyl-CoA and CO(2). This chain is 2-oxoglutarate dehydrogenase E1 component, found in Bacillus cereus (strain ZK / E33L).